Consider the following 344-residue polypeptide: Type II methyltransferase M.FnuDI (344 aa).

Positions 1–330 (MKLLSLFSGA…KRIKETLTDK (330 aa)) constitute an SAM-dependent MTase C5-type domain. Cys71 is a catalytic residue.

The protein belongs to the class I-like SAM-binding methyltransferase superfamily. C5-methyltransferase family.

The catalysed reaction is a 2'-deoxycytidine in DNA + S-adenosyl-L-methionine = a 5-methyl-2'-deoxycytidine in DNA + S-adenosyl-L-homocysteine + H(+). Its function is as follows. A methylase, recognizes the double-stranded sequence 5'-GGCC-3', methylates C-? on both strands, and protects the DNA from cleavage by the FnuDI endonuclease. The polypeptide is Type II methyltransferase M.FnuDI (fnuDIM) (Fusobacterium nucleatum).